Here is a 299-residue protein sequence, read N- to C-terminus: Delta-9 desaturase-like 5 protein (299 aa).

Transmembrane regions (helical) follow at residues 31–51 and 55–75; these read ADII…LAPF and WEAL…ITFS. A Histidine box-1 motif is present at residues 77–82; it reads HRNLAH. Positions 114-118 match the Histidine box-2 motif; that stretch reads HRFHH. Helical transmembrane passes span 174–194 and 199–219; these read IGFH…LPYL and GVGG…CHIW. Residues 246 to 250 carry the Histidine box-3 motif; the sequence is HNNHH.

This sequence belongs to the fatty acid desaturase type 1 family. The cofactor is Fe cation.

It is found in the endoplasmic reticulum membrane. It participates in lipid metabolism; polyunsaturated fatty acid biosynthesis. The chain is Delta-9 desaturase-like 5 protein from Arabidopsis thaliana (Mouse-ear cress).